Consider the following 294-residue polypeptide: Shikimate kinase (294 aa).

87–97 contributes to the ATP binding site; the sequence is PLAGGLKSSSA.

It belongs to the GHMP kinase family. Archaeal shikimate kinase subfamily.

Its subcellular location is the cytoplasm. The enzyme catalyses shikimate + ATP = 3-phosphoshikimate + ADP + H(+). Its pathway is metabolic intermediate biosynthesis; chorismate biosynthesis; chorismate from D-erythrose 4-phosphate and phosphoenolpyruvate: step 5/7. The polypeptide is Shikimate kinase (aroK) (Methanosarcina acetivorans (strain ATCC 35395 / DSM 2834 / JCM 12185 / C2A)).